The primary structure comprises 912 residues: MFTKLATKMFGSKNAREIKRMRKVVTRINELEEQFGALSDTELQGKTAEFRRRLDEGEALDSLLPEVFATVREASRRVMGMRHYDVQLIGGMTLHEGRIAEMKTGEGKTLVATAAVYLNALPGKGVHVVTVNDYLARRDAEWMGKLYRFLGMQVGVVASGQPPEEKRAAYQADITYGTNNEFGFDYLRDNMAFSIEDKVQRGLNFAIVDEVDSILIDEARTPLIISGAAEDSSKLYQAVNALVPSLEKGEVSEEGESSGDFTIDEKSRQVELTESGHEKVEDLLLGQGLLKEGESLYSAANLSLLHHVHSALRAHHLFQKDVDYIVQGGQVVIVDEHTGRTMPGRRWSEGLHQAIEAKEGLKIQAESQTLASTTFQNYFRLYDKLAGMTGTADTEAFEFRQIYGLDVVVIPPNKPIQRIDYNDLVYLTQEEKFHAIIDEIKDVTAEGRPILVGTASIEASELLSMLLKKARIDHKILNAKQHESEALIIAQAGRPGAVTIATNMAGRGTDIVLGGNWEYEVAALDNPSEEEVARMKAEWTERHNQVLDAGGLHIIGTERHESRRIDNQLRGRAGRQGDPGSSRFFLSLEDNLMRIFAPERVKNLMQAMGMKKGEAIEHRMVTNAIEKSQRKVEGRNFDMRKTLLEYDDVANDQRTVIYEQRNEVMASNDISEMIDTIREDVVDSVVSEFIPPQSMPEQWDVQGLEAQLQSEMAIELPIQQWLKDDNKLYEDNLRQKILDAIVAEYKAKEEVAGSEAMRKFEKQVFLQVLDTLWKEHLSNMDHLRRGIHLRGYAQKNPKQEYKREAFNLFETMLDTMKRDVTRVLCHVRVQSQEEMAEIERRRKEELEREMARAKLRHEQASAAQAEGEGDDGQQGQQATPETFVRQERKVGRNEPCPCGSGKKYKQCCGKVS.

ATP contacts are provided by residues Q87, 105–109 (GEGKT), and D510. Residues 854–912 (KLRHEQASAAQAEGEGDDGQQGQQATPETFVRQERKVGRNEPCPCGSGKKYKQCCGKVS) form a disordered region. Zn(2+)-binding residues include C896, C898, C907, and C908.

This sequence belongs to the SecA family. As to quaternary structure, monomer and homodimer. Part of the essential Sec protein translocation apparatus which comprises SecA, SecYEG and auxiliary proteins SecDF-YajC and YidC. Zn(2+) serves as cofactor.

The protein resides in the cell inner membrane. It localises to the cytoplasm. It carries out the reaction ATP + H2O + cellular proteinSide 1 = ADP + phosphate + cellular proteinSide 2.. Its function is as follows. Part of the Sec protein translocase complex. Interacts with the SecYEG preprotein conducting channel. Has a central role in coupling the hydrolysis of ATP to the transfer of proteins into and across the cell membrane, serving both as a receptor for the preprotein-SecB complex and as an ATP-driven molecular motor driving the stepwise translocation of polypeptide chains across the membrane. In Marinobacter nauticus (strain ATCC 700491 / DSM 11845 / VT8) (Marinobacter aquaeolei), this protein is Protein translocase subunit SecA.